The primary structure comprises 208 residues: Large ribosomal subunit protein bL25 (208 aa).

Belongs to the bacterial ribosomal protein bL25 family. CTC subfamily. In terms of assembly, part of the 50S ribosomal subunit; part of the 5S rRNA/L5/L18/L25 subcomplex. Contacts the 5S rRNA. Binds to the 5S rRNA independently of L5 and L18.

Its function is as follows. This is one of the proteins that binds to the 5S RNA in the ribosome where it forms part of the central protuberance. The polypeptide is Large ribosomal subunit protein bL25 (Bordetella pertussis (strain Tohama I / ATCC BAA-589 / NCTC 13251)).